The following is a 439-amino-acid chain: Deacetylvindoline O-acetyltransferase (439 aa).

His-158 (proton acceptor) is an active-site residue. Residues 317-344 (TKLVINELRKEKQKIKNLSREKLTYVAQ) are a coiled coil. Asp-380 acts as the Proton acceptor in catalysis.

The protein belongs to the plant acyltransferase family. As to quaternary structure, monomer. In terms of tissue distribution, predominantly expressed in young leaves of mature plants. Low expression in stems and flowers and not detected in roots. Confined to the laticifer and idioblast cells of leaves, stems, and flower buds.

The protein resides in the cytoplasm. The protein localises to the nucleus. The catalysed reaction is 4-O-deacetylvindoline + acetyl-CoA = vindoline + CoA. Its pathway is alkaloid biosynthesis; vindoline biosynthesis. Its function is as follows. Involved in the biosynthesis of vindoline, a precursor of vinblastine and vincristine. This is Deacetylvindoline O-acetyltransferase from Catharanthus roseus (Madagascar periwinkle).